Consider the following 191-residue polypeptide: Aminodeoxychorismate synthase component 2 (191 aa).

One can recognise a Glutamine amidotransferase type-1 domain in the interval 1-191 (MLLLIDNYDS…HQLLDNFLNR (191 aa)). Active-site residues include Cys-79, His-172, and Glu-174.

In terms of assembly, monomer. Heterodimer consisting of two non-identical subunits: a glutamine amidotransferase subunit (PabA) and a aminodeoxychorismate synthase subunit (PabB).

It carries out the reaction chorismate + L-glutamine = 4-amino-4-deoxychorismate + L-glutamate. It participates in cofactor biosynthesis; tetrahydrofolate biosynthesis; 4-aminobenzoate from chorismate: step 1/2. Functionally, part of a heterodimeric complex that catalyzes the two-step biosynthesis of 4-amino-4-deoxychorismate (ADC), a precursor of p-aminobenzoate (PABA) and tetrahydrofolate. In the first step, a glutamine amidotransferase (PabA) generates ammonia as a substrate that, along with chorismate, is used in the second step, catalyzed by aminodeoxychorismate synthase (PabB) to produce ADC. PabA converts glutamine into glutamate only in the presence of stoichiometric amounts of PabB. This is Aminodeoxychorismate synthase component 2 (pabA) from Serratia marcescens.